Consider the following 139-residue polypeptide: Putative pre-16S rRNA nuclease (139 aa).

This sequence belongs to the YqgF nuclease family.

The protein localises to the cytoplasm. Could be a nuclease involved in processing of the 5'-end of pre-16S rRNA. This Rippkaea orientalis (strain PCC 8801 / RF-1) (Cyanothece sp. (strain PCC 8801)) protein is Putative pre-16S rRNA nuclease.